Consider the following 258-residue polypeptide: Global transcriptional regulator CodY (258 aa).

The interval Met1–Leu156 is GAF domain. The segment at residues Ala204–Arg223 is a DNA-binding region (H-T-H motif).

The protein belongs to the CodY family.

The protein resides in the cytoplasm. Its function is as follows. DNA-binding global transcriptional regulator which is involved in the adaptive response to starvation and acts by directly or indirectly controlling the expression of numerous genes in response to nutrient availability. During rapid exponential growth, CodY is highly active and represses genes whose products allow adaptation to nutrient depletion. The polypeptide is Global transcriptional regulator CodY (Clostridium botulinum (strain Eklund 17B / Type B)).